The following is a 327-amino-acid chain: Ribose-phosphate pyrophosphokinase (327 aa).

Residues 46-48 (NGE) and 105-106 (RQ) contribute to the ATP site. Mg(2+)-binding residues include histidine 139 and aspartate 179. The active site involves lysine 203. Residues arginine 205, aspartate 231, and 235–239 (DTGGT) each bind D-ribose 5-phosphate.

Belongs to the ribose-phosphate pyrophosphokinase family. Class I subfamily. Homohexamer. It depends on Mg(2+) as a cofactor.

The protein localises to the cytoplasm. The enzyme catalyses D-ribose 5-phosphate + ATP = 5-phospho-alpha-D-ribose 1-diphosphate + AMP + H(+). It participates in metabolic intermediate biosynthesis; 5-phospho-alpha-D-ribose 1-diphosphate biosynthesis; 5-phospho-alpha-D-ribose 1-diphosphate from D-ribose 5-phosphate (route I): step 1/1. Involved in the biosynthesis of the central metabolite phospho-alpha-D-ribosyl-1-pyrophosphate (PRPP) via the transfer of pyrophosphoryl group from ATP to 1-hydroxyl of ribose-5-phosphate (Rib-5-P). The protein is Ribose-phosphate pyrophosphokinase of Mycobacterium leprae (strain TN).